Reading from the N-terminus, the 366-residue chain is Dihydroflavonol 4-reductase (366 aa).

Positions 45 and 164 each coordinate NADP(+).

Belongs to the NAD(P)-dependent epimerase/dehydratase family. Dihydroflavonol-4-reductase subfamily.

The enzyme catalyses a (2R,3S,4S)-leucoanthocyanidin + NADP(+) = a (2R,3R)-dihydroflavonol + NADPH + H(+). It carries out the reaction (2S)-flavan-4-ol + NADP(+) = (2S)-flavanone + NADPH + H(+). The protein operates within pigment biosynthesis; anthocyanin biosynthesis. Bifunctional enzyme involved in flavonoid metabolism. This is Dihydroflavonol 4-reductase (DFR) from Gerbera hybrida (Daisy).